A 78-amino-acid chain; its full sequence is Translation initiation factor IF-1, chloroplastic (78 aa).

The S1-like domain maps to M1–R72.

The protein belongs to the IF-1 family. In terms of assembly, component of the 30S ribosomal translation pre-initiation complex which assembles on the 30S ribosome in the order IF-2 and IF-3, IF-1 and N-formylmethionyl-tRNA(fMet); mRNA recruitment can occur at any time during PIC assembly.

It localises to the plastid. It is found in the chloroplast. Functionally, one of the essential components for the initiation of protein synthesis. Stabilizes the binding of IF-2 and IF-3 on the 30S subunit to which N-formylmethionyl-tRNA(fMet) subsequently binds. Helps modulate mRNA selection, yielding the 30S pre-initiation complex (PIC). Upon addition of the 50S ribosomal subunit IF-1, IF-2 and IF-3 are released leaving the mature 70S translation initiation complex. The sequence is that of Translation initiation factor IF-1, chloroplastic from Marchantia polymorpha (Common liverwort).